The chain runs to 487 residues: MSLPNSSCLLEDKMCESNKTTMASPQLMPLVVVLSTICLVTVGLNLLVLYAVRSERKLHTVGNLYIVSLSVADLIVGAVVMPMNILYLLMSKWSLGRPLCLFWLSMDYVASTASIFSVFILCIDRYRSVQQPLRYLKYRTKTRASATILGAWFLSFLWVIPILGWNHFMQQTSVRREDKCETDFYDVTWFKVMTAIINFYLPTLLMLWFYAKIYKAVRQHCQHRELINGSLPSFSEIKLRPENPKGDAKKPGKESPWEVLKRKPKDAGGGSVLKSPSQTPKEMKSPVVFSQEDDREVDKLHCFPLDIVHMQTAAEGSSRDYVAVNQSHGQLKTDEQGLNTHGASEISEDQMLGDSQSFSRTDSDTTTETASGKGKLRSGSNTGLGYIKFTWKRLRSHSRQYVSGLHMNRERKAAKQLGFIMAAFILCWIPYFIFFMVIAFCKNCCNEHLHMFTIWLGYINSTLNPLIYPLCNENFKKTFKRILHIRS.

The Extracellular portion of the chain corresponds to 1-29 (MSLPNSSCLLEDKMCESNKTTMASPQLMP). Residues Asn-5 and Asn-18 are each glycosylated (N-linked (GlcNAc...) asparagine). Residues 30–50 (LVVVLSTICLVTVGLNLLVLY) form a helical membrane-spanning segment. Topologically, residues 51 to 64 (AVRSERKLHTVGNL) are cytoplasmic. The helical transmembrane segment at 65–89 (YIVSLSVADLIVGAVVMPMNILYLL) threads the bilayer. Residues 90–97 (MSKWSLGR) lie on the Extracellular side of the membrane. Residues 98–123 (PLCLFWLSMDYVASTASIFSVFILCI) traverse the membrane as a helical segment. Cys-100 and Cys-180 are oxidised to a cystine. The histamine site is built by Asp-107 and Thr-112. Residues 107-112 (DYVAST) form an important for agonist binding region. The Cytoplasmic portion of the chain corresponds to 124–144 (DRYRSVQQPLRYLKYRTKTRA). Thr-140 and Thr-142 each carry phosphothreonine. Residues 145 to 164 (SATILGAWFLSFLWVIPILG) traverse the membrane as a helical segment. Topologically, residues 165–188 (WNHFMQQTSVRREDKCETDFYDVT) are extracellular. A helical membrane pass occupies residues 189-211 (WFKVMTAIINFYLPTLLMLWFYA). Asn-198 is a histamine binding site. Over 212 to 416 (KIYKAVRQHC…MNRERKAAKQ (205 aa)) the chain is Cytoplasmic. Ser-230 is subject to Phosphoserine. The segment covering 238 to 261 (KLRPENPKGDAKKPGKESPWEVLK) has biased composition (basic and acidic residues). A disordered region spans residues 238–292 (KLRPENPKGDAKKPGKESPWEVLKRKPKDAGGGSVLKSPSQTPKEMKSPVVFSQE). Thr-279 bears the Phosphothreonine mark. Phosphoserine occurs at positions 344 and 347. Positions 345-377 (EISEDQMLGDSQSFSRTDSDTTTETASGKGKLR) are disordered. Over residues 353 to 370 (GDSQSFSRTDSDTTTETA) the composition is skewed to polar residues. Phosphoserine is present on residues Ser-380, Ser-396, and Ser-398. A helical membrane pass occupies residues 417-440 (LGFIMAAFILCWIPYFIFFMVIAF). The important for agonist binding stretch occupies residues 424 to 428 (FILCW). Tyr-431 contributes to the histamine binding site. The cysteines at positions 441 and 444 are disulfide-linked. Topologically, residues 441–446 (CKNCCN) are extracellular. A helical membrane pass occupies residues 447 to 469 (EHLHMFTIWLGYINSTLNPLIYP). Over 470–487 (LCNENFKKTFKRILHIRS) the chain is Cytoplasmic.

The protein belongs to the G-protein coupled receptor 1 family. Phosphorylation at sites in the second and third cytoplasmic loops independently contribute to agonist-induced receptor down-regulation.

It localises to the cell membrane. In terms of biological role, G-protein-coupled receptor for histamine, a biogenic amine that functions as an immune modulator and a neurotransmitter. Through the H1 receptor, histamine mediates the contraction of smooth muscles and increases capillary permeability due to contraction of terminal venules. Also mediates neurotransmission in the central nervous system and thereby regulates circadian rhythms, emotional and locomotor activities as well as cognitive functions. The protein is Histamine H1 receptor of Gorilla gorilla gorilla (Western lowland gorilla).